The following is a 558-amino-acid chain: Formate--tetrahydrofolate ligase (558 aa).

65–72 (TPAGEGKT) contributes to the ATP binding site.

Belongs to the formate--tetrahydrofolate ligase family.

The catalysed reaction is (6S)-5,6,7,8-tetrahydrofolate + formate + ATP = (6R)-10-formyltetrahydrofolate + ADP + phosphate. It participates in one-carbon metabolism; tetrahydrofolate interconversion. The polypeptide is Formate--tetrahydrofolate ligase (Methylobacterium sp. (strain 4-46)).